Reading from the N-terminus, the 439-residue chain is Acyl-coenzyme A thioesterase 10, mitochondrial (439 aa).

Residues 1 to 21 (MKRAAMRLWTLNKGLLTHGRG) constitute a mitochondrion transit peptide. HotDog ACOT-type domains follow at residues 85-209 (SYIE…QDSE) and 289-401 (EDTK…EKEV).

The protein belongs to the acyl coenzyme A hydrolase family.

It localises to the mitochondrion. In terms of biological role, catalyzes the hydrolysis of acyl-CoAs into free fatty acids and coenzyme A (CoASH), regulating their respective intracellular levels. Active on long chain acyl-CoAs. The sequence is that of Acyl-coenzyme A thioesterase 10, mitochondrial from Mus musculus (Mouse).